The sequence spans 343 residues: Anthranilate phosphoribosyltransferase (343 aa).

5-phospho-alpha-D-ribose 1-diphosphate-binding positions include glycine 84, 87-88, threonine 92, 94-97, 112-120, and serine 124; these read GD, NIST, and KHGNRGVSS. Glycine 84 serves as a coordination point for anthranilate. Mg(2+) is bound at residue serine 96. Asparagine 115 is an anthranilate binding site. Arginine 170 provides a ligand contact to anthranilate. Mg(2+) is bound by residues aspartate 229 and glutamate 230.

This sequence belongs to the anthranilate phosphoribosyltransferase family. In terms of assembly, homodimer. The cofactor is Mg(2+).

It carries out the reaction N-(5-phospho-beta-D-ribosyl)anthranilate + diphosphate = 5-phospho-alpha-D-ribose 1-diphosphate + anthranilate. Its pathway is amino-acid biosynthesis; L-tryptophan biosynthesis; L-tryptophan from chorismate: step 2/5. Its function is as follows. Catalyzes the transfer of the phosphoribosyl group of 5-phosphorylribose-1-pyrophosphate (PRPP) to anthranilate to yield N-(5'-phosphoribosyl)-anthranilate (PRA). The protein is Anthranilate phosphoribosyltransferase of Burkholderia cenocepacia (strain ATCC BAA-245 / DSM 16553 / LMG 16656 / NCTC 13227 / J2315 / CF5610) (Burkholderia cepacia (strain J2315)).